The chain runs to 503 residues: MSENSTVKKNVRVRYAPSPTGFLHIGNAQSALFNYLFARHYHGTMVLRIEDTDVKRNVPHGEDSQIDNLHWLGIDWDEGPDKPNPKYAPYHQTERQDLYHRYITQLLDQGLAYKDYATEDELTTMRDQQRAAGEAPHYDGRWYGRSVADQQAAEARGLKPSIRLHLPANHEYAWDDIIKGHVAFNSDNMGGDFIIEKSNGMPTYNFAVVIDDYLMDITDVLRGDDHIANTPKQIAVYEALGLKHPNFGHITLIYNPKTRKKLSKRDKETLQFISQYKNQGYLSEAIFNFIAFLGWSPEGEDELFSREELIERYDPARMSKSPAYFDQSKLDWINAAYIKRLDLDDMTDRVLELVDEGQTDVARQVKALQLPDLRTLTSQVCKIYQTEIHQLSEIMDKVLFYVTILQEPLDYDQLRQFDRTATLAVLTAFRKHVQALPVDVATPDFKKMIQTVSQETGVTGRNLYFPLNVAFTGDHSAPQIDEVLRLFANSTIIELLTKAIAHV.

The 'HIGH' region signature appears at Pro-17–Asn-27. The 'KMSKS' region signature appears at Lys-261–Arg-265. Position 264 (Lys-264) interacts with ATP.

Belongs to the class-I aminoacyl-tRNA synthetase family. Glutamate--tRNA ligase type 1 subfamily. Monomer.

It is found in the cytoplasm. It catalyses the reaction tRNA(Glu) + L-glutamate + ATP = L-glutamyl-tRNA(Glu) + AMP + diphosphate. Its function is as follows. Catalyzes the attachment of glutamate to tRNA(Glu) in a two-step reaction: glutamate is first activated by ATP to form Glu-AMP and then transferred to the acceptor end of tRNA(Glu). In Levilactobacillus brevis (strain ATCC 367 / BCRC 12310 / CIP 105137 / JCM 1170 / LMG 11437 / NCIMB 947 / NCTC 947) (Lactobacillus brevis), this protein is Glutamate--tRNA ligase 1.